A 132-amino-acid chain; its full sequence is Small ribosomal subunit protein uS8 (132 aa).

It belongs to the universal ribosomal protein uS8 family. Part of the 30S ribosomal subunit. Contacts proteins S5 and S12.

In terms of biological role, one of the primary rRNA binding proteins, it binds directly to 16S rRNA central domain where it helps coordinate assembly of the platform of the 30S subunit. This is Small ribosomal subunit protein uS8 from Xanthomonas axonopodis pv. citri (strain 306).